We begin with the raw amino-acid sequence, 83 residues long: Cytochrome b559 subunit alpha (83 aa).

A helical membrane pass occupies residues 21–35 (VIHSITIPSLFIAGW). Residue His23 participates in heme binding.

It belongs to the PsbE/PsbF family. Heterodimer of an alpha subunit and a beta subunit. PSII is composed of 1 copy each of membrane proteins PsbA, PsbB, PsbC, PsbD, PsbE, PsbF, PsbH, PsbI, PsbJ, PsbK, PsbL, PsbM, PsbT, PsbX, PsbY, PsbZ, Psb30/Ycf12, at least 3 peripheral proteins of the oxygen-evolving complex and a large number of cofactors. It forms dimeric complexes. Heme b is required as a cofactor.

The protein resides in the plastid. It localises to the chloroplast thylakoid membrane. This b-type cytochrome is tightly associated with the reaction center of photosystem II (PSII). PSII is a light-driven water:plastoquinone oxidoreductase that uses light energy to abstract electrons from H(2)O, generating O(2) and a proton gradient subsequently used for ATP formation. It consists of a core antenna complex that captures photons, and an electron transfer chain that converts photonic excitation into a charge separation. This chain is Cytochrome b559 subunit alpha, found in Tupiella akineta (Green alga).